We begin with the raw amino-acid sequence, 140 residues long: Nucleoside diphosphate kinase (140 aa).

ATP contacts are provided by Lys11, Phe59, Arg87, Thr93, Arg104, and Asn114. The Pros-phosphohistidine intermediate role is filled by His117.

This sequence belongs to the NDK family. As to quaternary structure, homotetramer. Mg(2+) serves as cofactor.

The protein resides in the cytoplasm. The catalysed reaction is a 2'-deoxyribonucleoside 5'-diphosphate + ATP = a 2'-deoxyribonucleoside 5'-triphosphate + ADP. The enzyme catalyses a ribonucleoside 5'-diphosphate + ATP = a ribonucleoside 5'-triphosphate + ADP. Major role in the synthesis of nucleoside triphosphates other than ATP. The ATP gamma phosphate is transferred to the NDP beta phosphate via a ping-pong mechanism, using a phosphorylated active-site intermediate. This Erythrobacter litoralis (strain HTCC2594) protein is Nucleoside diphosphate kinase.